Here is a 57-residue protein sequence, read N- to C-terminus: Large ribosomal subunit protein bL33 (57 aa).

Belongs to the bacterial ribosomal protein bL33 family.

The protein is Large ribosomal subunit protein bL33 of Shewanella sp. (strain W3-18-1).